The following is a 314-amino-acid chain: Carbamate kinase (314 aa).

This sequence belongs to the carbamate kinase family. As to quaternary structure, homodimer.

It is found in the cytoplasm. The enzyme catalyses hydrogencarbonate + NH4(+) + ATP = carbamoyl phosphate + ADP + H2O + H(+). Carbamate kinase that plays a biosynthetic role in that it produces carbamoyl-phosphate. The protein is Carbamate kinase (cpkA) of Pyrococcus furiosus (strain ATCC 43587 / DSM 3638 / JCM 8422 / Vc1).